The primary structure comprises 229 residues: Protein MC132 (229 aa).

Interacts with host RELA (via RHD domain), ELOB, ELOC and CUL5; these interactions induce the proteasomal degradation of host RELA.

Its subcellular location is the host cytoplasm. Inhibits host NF-kappa-B activation stimulated by IL-1 and multiple PRR viral detection pathways. Targets host NF-kappa-B component RELA/p65 for ubiquitin-dependent proteasomal degradation. This Homo sapiens (Human) protein is Protein MC132 (MC132).